Consider the following 675-residue polypeptide: Potassium-transporting ATPase ATP-binding subunit (675 aa).

The next 4 helical transmembrane spans lie at 34 to 54 (IMFVVEVGMILTLILICFPDI), 65 to 85 (LITIFIILLITILFANFSEAF), 216 to 236 (IALFTLLTTLTIIFLVVIVTL), and 245 to 265 (LILPIAMLIALTVCLIPTTIG). Catalysis depends on Asp304, which acts as the 4-aspartylphosphate intermediate. ATP is bound by residues Asp341, Glu345, 372–379 (FTAETRMS), and Lys390. Residues Asp513 and Asp517 each contribute to the Mg(2+) site. A run of 3 helical transmembrane segments spans residues 569-591 (ALTTFSLANDVAKYFAILPALMM), 611-631 (AIISALIFNALIIVALIPIAM), and 644-664 (IFINNMLIYGLGGLIVPFLGI).

The protein belongs to the cation transport ATPase (P-type) (TC 3.A.3) family. Type IA subfamily. The system is composed of three essential subunits: KdpA, KdpB and KdpC.

Its subcellular location is the cell membrane. It carries out the reaction K(+)(out) + ATP + H2O = K(+)(in) + ADP + phosphate + H(+). Functionally, part of the high-affinity ATP-driven potassium transport (or Kdp) system, which catalyzes the hydrolysis of ATP coupled with the electrogenic transport of potassium into the cytoplasm. This subunit is responsible for energy coupling to the transport system and for the release of the potassium ions to the cytoplasm. This is Potassium-transporting ATPase ATP-binding subunit from Staphylococcus aureus (strain bovine RF122 / ET3-1).